The following is a 281-amino-acid chain: Hydroxyethylthiazole kinase (281 aa).

ATP-binding residues include Arg-124 and Ser-169.

It belongs to the Thz kinase family. Mg(2+) is required as a cofactor.

The catalysed reaction is 5-(2-hydroxyethyl)-4-methylthiazole + ATP = 4-methyl-5-(2-phosphooxyethyl)-thiazole + ADP + H(+). The protein operates within cofactor biosynthesis; thiamine diphosphate biosynthesis; 4-methyl-5-(2-phosphoethyl)-thiazole from 5-(2-hydroxyethyl)-4-methylthiazole: step 1/1. Catalyzes the phosphorylation of the hydroxyl group of 4-methyl-5-beta-hydroxyethylthiazole (THZ). This Rhodococcus erythropolis (strain PR4 / NBRC 100887) protein is Hydroxyethylthiazole kinase.